We begin with the raw amino-acid sequence, 439 residues long: GTPase Der (439 aa).

EngA-type G domains lie at 4–168 (PIVA…KDDE) and 177–352 (INIA…DNYT). Residues 10 to 17 (GRPNVGKS), 57 to 61 (DTGGI), 120 to 123 (NKID), 183 to 190 (GKPNVGKS), 230 to 234 (DTAGL), and 295 to 298 (NKWD) contribute to the GTP site. A KH-like domain is found at 353-437 (KRVKTGVLND…GIKLEFRERK (85 aa)).

It belongs to the TRAFAC class TrmE-Era-EngA-EngB-Septin-like GTPase superfamily. EngA (Der) GTPase family. As to quaternary structure, associates with the 50S ribosomal subunit.

Functionally, GTPase that plays an essential role in the late steps of ribosome biogenesis. The protein is GTPase Der of Clostridium botulinum (strain Kyoto / Type A2).